Consider the following 626-residue polypeptide: Replication protein E1 (626 aa).

The Nuclear localization signal signature appears at 82-84; it reads KRK. Residues serine 90 and serine 106 each carry the phosphoserine; by host modification. The interval 160–327 is DNA-binding region; sequence QSQQNSNLHL…ILITENSSEV (168 aa). The SF3 helicase domain maps to 412–576; that stretch reads GSWLVIMQFL…CPLNEDGKPL (165 aa). 452-459 provides a ligand contact to ATP; it reads GPPDTGKS. Residue lysine 533 forms a Glycyl lysine isopeptide (Lys-Gly) (interchain with G-Cter in SUMO) linkage. The segment covering 598–608 has biased composition (acidic residues); the sequence is SDQEEEEEGDE. The tract at residues 598-626 is disordered; the sequence is SDQEEEEEGDENGSRGTFICSTRNSNDFT. Polar residues predominate over residues 616–626; sequence ICSTRNSNDFT.

Belongs to the papillomaviridae E1 protein family. As to quaternary structure, can form hexamers. Interacts with E2 protein; this interaction increases E1 DNA binding specificity. Interacts with host DNA polymerase subunit POLA2. Interacts with host single stranded DNA-binding protein RPA1. Interacts with host TOP1; this interaction stimulates the enzymatic activity of TOP1. Post-translationally, phosphorylated. Sumoylated.

The protein resides in the host nucleus. It carries out the reaction Couples ATP hydrolysis with the unwinding of duplex DNA by translocating in the 3'-5' direction.. It catalyses the reaction ATP + H2O = ADP + phosphate + H(+). Functionally, ATP-dependent DNA 3'-5' helicase required for initiation of viral DNA replication. It forms a complex with the viral E2 protein. The E1-E2 complex binds to the replication origin which contains binding sites for both proteins. During the initial step, a dimer of E1 interacts with a dimer of protein E2 leading to a complex that binds the viral origin of replication with high specificity. Then, a second dimer of E1 displaces the E2 dimer in an ATP-dependent manner to form the E1 tetramer. Following this, two E1 monomers are added to each half of the site, which results in the formation of two E1 trimers on the viral ori. Subsequently, two hexamers will be created. The double hexamer acts as a bi-directional helicase machinery and unwinds the viral DNA and then recruits the host DNA polymerase to start replication. This chain is Replication protein E1, found in Bovine papillomavirus type 5.